The chain runs to 82 residues: RNA-binding protein Hfq (82 aa).

The Sm domain maps to 10–70 (DAFLNQVRKD…ISTVAPLRPI (61 aa)).

Belongs to the Hfq family. As to quaternary structure, homohexamer.

Its function is as follows. RNA chaperone that binds small regulatory RNA (sRNAs) and mRNAs to facilitate mRNA translational regulation in response to envelope stress, environmental stress and changes in metabolite concentrations. Also binds with high specificity to tRNAs. The sequence is that of RNA-binding protein Hfq from Syntrophomonas wolfei subsp. wolfei (strain DSM 2245B / Goettingen).